A 387-amino-acid polypeptide reads, in one-letter code: Oleoyl-12-hydroxylase FAH12 (387 aa).

Residues 1–34 are disordered; sequence MGGGGRMSTVITSNNSEKKGGSSHLKRAPHTKPP. Helical transmembrane passes span 61 to 81 and 88 to 108; these read AYDV…FPYI and VAWL…WVIG. The Histidine box-1 motif lies at 109-113; the sequence is HECGH. Residues 121 to 141 form a helical membrane-spanning segment; that stretch reads LADDIVGLIVHSALLVPYFSW. The short motif at 145–149 is the Histidine box-2 element; the sequence is HRRHH. Helical transmembrane passes span 183–203, 229–249, and 253–273; these read VLTL…FNVS, IYIA…ATMA, and AWVM…LVMI. The short motif at 319-323 is the Histidine box-3 element; the sequence is HVAHH.

The protein belongs to the fatty acid desaturase type 1 family. Expressed in seeds. Barely detected in leaves.

The protein localises to the microsome membrane. The catalysed reaction is a 1-acyl-2-(9Z)-octadecenoyl-sn-glycero-3-phosphocholine + 2 Fe(II)-[cytochrome b5] + O2 + 2 H(+) = a 1-acyl-2-[(R)-12-hydroxyoleoyl]-sn-glycero-3-phosphocholine + 2 Fe(III)-[cytochrome b5] + H2O. It functions in the pathway lipid metabolism; monounsaturated fatty acid biosynthesis. Inhibited by oleoyloxyethyl phosphocholine. In terms of biological role, oleoyl-12-hydroxylase involved in the biosynthesis of ricinoleate (12-hydroxy-cis-9-octadecenoate), the major fatty acid constituent of the oil seeds from castor bean plants. Catalyzes the hydroxylation at the 12-position of 1-acyl-2-oleoyl-sn-glycero-3-phosphocholine (2-oleoyl-PC), which seems to be the actual physiological subtrate. It uses cytochrome b5 as an electron donor. May also be involved in the production of lesquerolic acid (14-hydroxyeicos-cis-ll-enoic acid) in vitro. The sequence is that of Oleoyl-12-hydroxylase FAH12 from Ricinus communis (Castor bean).